We begin with the raw amino-acid sequence, 156 residues long: Phytohormone-binding protein (156 aa).

3 residues coordinate gibberellin A3: glutamine 22, glutamine 68, and threonine 141.

It belongs to the BetVI family.

In terms of biological role, binds gibberellin A3 (GA3) in vitro. In Medicago truncatula (Barrel medic), this protein is Phytohormone-binding protein.